The chain runs to 473 residues: ATP synthase subunit beta (473 aa).

153 to 160 serves as a coordination point for ATP; that stretch reads GGAGVGKT.

The protein belongs to the ATPase alpha/beta chains family. F-type ATPases have 2 components, CF(1) - the catalytic core - and CF(0) - the membrane proton channel. CF(1) has five subunits: alpha(3), beta(3), gamma(1), delta(1), epsilon(1). CF(0) has three main subunits: a(1), b(2) and c(9-12). The alpha and beta chains form an alternating ring which encloses part of the gamma chain. CF(1) is attached to CF(0) by a central stalk formed by the gamma and epsilon chains, while a peripheral stalk is formed by the delta and b chains.

It is found in the cell membrane. It carries out the reaction ATP + H2O + 4 H(+)(in) = ADP + phosphate + 5 H(+)(out). Produces ATP from ADP in the presence of a proton gradient across the membrane. The catalytic sites are hosted primarily by the beta subunits. The chain is ATP synthase subunit beta from Rickettsia africae (strain ESF-5).